Here is a 112-residue protein sequence, read N- to C-terminus: Large ribosomal subunit protein uL22 (112 aa).

The protein belongs to the universal ribosomal protein uL22 family. Part of the 50S ribosomal subunit.

Its function is as follows. This protein binds specifically to 23S rRNA; its binding is stimulated by other ribosomal proteins, e.g. L4, L17, and L20. It is important during the early stages of 50S assembly. It makes multiple contacts with different domains of the 23S rRNA in the assembled 50S subunit and ribosome. The globular domain of the protein is located near the polypeptide exit tunnel on the outside of the subunit, while an extended beta-hairpin is found that lines the wall of the exit tunnel in the center of the 70S ribosome. The sequence is that of Large ribosomal subunit protein uL22 from Sorangium cellulosum (strain So ce56) (Polyangium cellulosum (strain So ce56)).